Consider the following 455-residue polypeptide: Phosphoglucosamine mutase (455 aa).

The active-site Phosphoserine intermediate is S104. Residues S104, D253, D255, and D257 each coordinate Mg(2+). The residue at position 104 (S104) is a Phosphoserine.

Belongs to the phosphohexose mutase family. It depends on Mg(2+) as a cofactor. In terms of processing, activated by phosphorylation.

It carries out the reaction alpha-D-glucosamine 1-phosphate = D-glucosamine 6-phosphate. In terms of biological role, catalyzes the conversion of glucosamine-6-phosphate to glucosamine-1-phosphate. This is Phosphoglucosamine mutase from Psychrobacter cryohalolentis (strain ATCC BAA-1226 / DSM 17306 / VKM B-2378 / K5).